Here is a 258-residue protein sequence, read N- to C-terminus: Tryptophan synthase alpha chain (258 aa).

Active-site proton acceptor residues include Glu-47 and Asp-58.

The protein belongs to the TrpA family. In terms of assembly, tetramer of two alpha and two beta chains.

The catalysed reaction is (1S,2R)-1-C-(indol-3-yl)glycerol 3-phosphate + L-serine = D-glyceraldehyde 3-phosphate + L-tryptophan + H2O. The protein operates within amino-acid biosynthesis; L-tryptophan biosynthesis; L-tryptophan from chorismate: step 5/5. In terms of biological role, the alpha subunit is responsible for the aldol cleavage of indoleglycerol phosphate to indole and glyceraldehyde 3-phosphate. This chain is Tryptophan synthase alpha chain, found in Bacillus anthracis (strain CDC 684 / NRRL 3495).